The following is a 735-amino-acid chain: Serine/threonine-protein kinase BRSK2 (735 aa).

The region spanning 20 to 271 is the Protein kinase domain; it reads YRLEKTLGKG…LEHIQKHIWY (252 aa). ATP-binding positions include 26 to 34 and lysine 49; that span reads LGKGQTGLV. Aspartate 142 acts as the Proton acceptor in catalysis. Threonine 175 is subject to Phosphothreonine; by LKB1. At threonine 261 the chain carries Phosphothreonine; by PKA. Serine 295 is modified (phosphoserine). The 43-residue stretch at 298 to 340 folds into the UBA domain; sequence DIDPDVLDSMHSLGCFRDRNKLLQDLLSEEENQEKMIYFLLLD. Positions 346–367 are enriched in basic and acidic residues; that stretch reads PSHEDEDLPPRNEIDPPRKRVD. Disordered stretches follow at residues 346 to 476, 493 to 514, and 682 to 735; these read PSHE…GVPW, FHRR…PESS, and KNGQ…REQP. Phosphoserine is present on residues serine 368, serine 383, serine 394, serine 413, alanine 417, serine 424, and serine 428. Residues 411–429 show a composition bias toward low complexity; it reads SRSISGASSGLSTSPLSSP. Positions 432 to 446 are enriched in pro residues; the sequence is TPHPSPRGSPLPTPK. Phosphoserine is present on serine 456. Residues threonine 460, threonine 464, and threonine 510 each carry the phosphothreonine modification. Phosphoserine is present on residues serine 513 and serine 514.

The protein belongs to the protein kinase superfamily. CAMK Ser/Thr protein kinase family. SNF1 subfamily. Interacts with FZR1, a regulatory subunit of the APC ubiquitin ligase complex. Interacts with COPS5. Interacts with PAK1. Mg(2+) serves as cofactor. Post-translationally, may be phosphorylated at Thr-261 by PKA. Phosphorylated at Thr-175 by STK11/LKB1 in complex with STE20-related adapter-alpha (STRADA) pseudo kinase and CAB39. Not phosphorylated at Thr-175 by CaMKK2. In contrast, it is phosphorylated and activated by CaMKK1. May be inactivated via dephosphorylation of Thr-175 by PP2C. Polyubiquitinated by the APC complex in conjunction with FZR1, leading to its proteasomal degradation. Targeted for proteasomal degradation by interaction with COPS5. BRSK2 levels change during the cell cycle. BRSK2 levels are low at the G1/S boundary and gradually increase as cells progress into G2 phase. BRSK2 levels decrease rapidly at the end of mitosis.

The protein localises to the cytoplasm. It is found in the cytoskeleton. Its subcellular location is the microtubule organizing center. The protein resides in the centrosome. It localises to the perinuclear region. The protein localises to the endoplasmic reticulum. It carries out the reaction L-seryl-[protein] + ATP = O-phospho-L-seryl-[protein] + ADP + H(+). The enzyme catalyses L-threonyl-[protein] + ATP = O-phospho-L-threonyl-[protein] + ADP + H(+). It catalyses the reaction L-seryl-[tau protein] + ATP = O-phospho-L-seryl-[tau protein] + ADP + H(+). The catalysed reaction is L-threonyl-[tau protein] + ATP = O-phospho-L-threonyl-[tau protein] + ADP + H(+). Its activity is regulated as follows. Activated by phosphorylation on Thr-175 by STK11/LKB1. Serine/threonine-protein kinase that plays a key role in polarization of neurons and axonogenesis, cell cycle progress and insulin secretion. Phosphorylates CDK16, CDC25C, MAPT/TAU, PAK1 and WEE1. Following phosphorylation and activation by STK11/LKB1, acts as a key regulator of polarization of cortical neurons, probably by mediating phosphorylation of microtubule-associated proteins such as MAPT/TAU at 'Thr-523' and 'Ser-573'. Also regulates neuron polarization by mediating phosphorylation of WEE1 at 'Ser-642' in post-mitotic neurons, leading to down-regulate WEE1 activity in polarized neurons. Plays a role in the regulation of the mitotic cell cycle progress and the onset of mitosis. Plays a role in the regulation of insulin secretion in response to elevated glucose levels, probably via phosphorylation of CDK16 and PAK1. While BRSK2 phosphorylated at Thr-175 can inhibit insulin secretion, BRSK2 phosphorylated at Thr-261 can promote insulin secretion. Regulates reorganization of the actin cytoskeleton. May play a role in the apoptotic response triggered by endoplasmic reticulum (ER) stress. This Rattus norvegicus (Rat) protein is Serine/threonine-protein kinase BRSK2 (Brsk2).